Here is a 318-residue protein sequence, read N- to C-terminus: Pantothenate kinase (318 aa).

96–103 serves as a coordination point for ATP; the sequence is GSVAVGKS.

The protein belongs to the prokaryotic pantothenate kinase family.

Its subcellular location is the cytoplasm. It catalyses the reaction (R)-pantothenate + ATP = (R)-4'-phosphopantothenate + ADP + H(+). It participates in cofactor biosynthesis; coenzyme A biosynthesis; CoA from (R)-pantothenate: step 1/5. In Bradyrhizobium diazoefficiens (strain JCM 10833 / BCRC 13528 / IAM 13628 / NBRC 14792 / USDA 110), this protein is Pantothenate kinase.